The chain runs to 475 residues: Ribulose bisphosphate carboxylase large chain (475 aa).

A propeptide spanning residues 1-2 (MS) is cleaved from the precursor. Proline 3 bears the N-acetylproline mark. Lysine 14 carries the post-translational modification N6,N6,N6-trimethyllysine. Residues asparagine 123 and threonine 173 each contribute to the substrate site. The active-site Proton acceptor is the lysine 175. Lysine 177 contacts substrate. 3 residues coordinate Mg(2+): lysine 201, aspartate 203, and glutamate 204. N6-carboxylysine is present on lysine 201. Histidine 294 (proton acceptor) is an active-site residue. Arginine 295, histidine 327, and serine 379 together coordinate substrate.

Belongs to the RuBisCO large chain family. Type I subfamily. In terms of assembly, heterohexadecamer of 8 large chains and 8 small chains; disulfide-linked. The disulfide link is formed within the large subunit homodimers. Mg(2+) serves as cofactor. Post-translationally, the disulfide bond which can form in the large chain dimeric partners within the hexadecamer appears to be associated with oxidative stress and protein turnover.

It is found in the plastid. It localises to the chloroplast. It carries out the reaction 2 (2R)-3-phosphoglycerate + 2 H(+) = D-ribulose 1,5-bisphosphate + CO2 + H2O. It catalyses the reaction D-ribulose 1,5-bisphosphate + O2 = 2-phosphoglycolate + (2R)-3-phosphoglycerate + 2 H(+). In terms of biological role, ruBisCO catalyzes two reactions: the carboxylation of D-ribulose 1,5-bisphosphate, the primary event in carbon dioxide fixation, as well as the oxidative fragmentation of the pentose substrate in the photorespiration process. Both reactions occur simultaneously and in competition at the same active site. The sequence is that of Ribulose bisphosphate carboxylase large chain from Stellaria media (Common chickweed).